Here is a 73-residue protein sequence, read N- to C-terminus: Translation initiation factor IF-1 (73 aa).

One can recognise an S1-like domain in the interval 1–72; it reads MAKDDVIEVE…TKGRITYRFI (72 aa).

It belongs to the IF-1 family. As to quaternary structure, component of the 30S ribosomal translation pre-initiation complex which assembles on the 30S ribosome in the order IF-2 and IF-3, IF-1 and N-formylmethionyl-tRNA(fMet); mRNA recruitment can occur at any time during PIC assembly.

The protein localises to the cytoplasm. Its function is as follows. One of the essential components for the initiation of protein synthesis. Stabilizes the binding of IF-2 and IF-3 on the 30S subunit to which N-formylmethionyl-tRNA(fMet) subsequently binds. Helps modulate mRNA selection, yielding the 30S pre-initiation complex (PIC). Upon addition of the 50S ribosomal subunit IF-1, IF-2 and IF-3 are released leaving the mature 70S translation initiation complex. This is Translation initiation factor IF-1 from Lactobacillus acidophilus (strain ATCC 700396 / NCK56 / N2 / NCFM).